The following is a 345-amino-acid chain: Type II restriction enzyme HgiCI (345 aa).

The enzyme catalyses Endonucleolytic cleavage of DNA to give specific double-stranded fragments with terminal 5'-phosphates.. A P subtype restriction enzyme that recognizes the double-stranded sequence 5'-GGYRCC-3' and cleaves after G-1. This Herpetosiphon aurantiacus (Herpetosiphon giganteus) protein is Type II restriction enzyme HgiCI (hgiCIR).